We begin with the raw amino-acid sequence, 610 residues long: Dihydroxy-acid dehydratase (610 aa).

Asp-81 contributes to the Mg(2+) binding site. Residue Cys-122 coordinates [2Fe-2S] cluster. Mg(2+) contacts are provided by Asp-123 and Lys-124. Lys-124 carries the N6-carboxylysine modification. Cys-193 lines the [2Fe-2S] cluster pocket. A Mg(2+)-binding site is contributed by Glu-489. Ser-515 acts as the Proton acceptor in catalysis.

It belongs to the IlvD/Edd family. Homodimer. [2Fe-2S] cluster serves as cofactor. Requires Mg(2+) as cofactor.

It carries out the reaction (2R)-2,3-dihydroxy-3-methylbutanoate = 3-methyl-2-oxobutanoate + H2O. The catalysed reaction is (2R,3R)-2,3-dihydroxy-3-methylpentanoate = (S)-3-methyl-2-oxopentanoate + H2O. It participates in amino-acid biosynthesis; L-isoleucine biosynthesis; L-isoleucine from 2-oxobutanoate: step 3/4. The protein operates within amino-acid biosynthesis; L-valine biosynthesis; L-valine from pyruvate: step 3/4. Functionally, functions in the biosynthesis of branched-chain amino acids. Catalyzes the dehydration of (2R,3R)-2,3-dihydroxy-3-methylpentanoate (2,3-dihydroxy-3-methylvalerate) into 2-oxo-3-methylpentanoate (2-oxo-3-methylvalerate) and of (2R)-2,3-dihydroxy-3-methylbutanoate (2,3-dihydroxyisovalerate) into 2-oxo-3-methylbutanoate (2-oxoisovalerate), the penultimate precursor to L-isoleucine and L-valine, respectively. The chain is Dihydroxy-acid dehydratase from Xylella fastidiosa (strain 9a5c).